The chain runs to 508 residues: Hydroxymethylglutaryl-CoA synthase, mitochondrial (508 aa).

The transit peptide at 1–37 (MQRLLTPVRQVLQVKRVMQEASLLPARLLPAAHPSFS) directs the protein to the mitochondrion. Position 52 is an N6-succinyllysine (K52). (3S)-3-hydroxy-3-methylglutaryl-CoA is bound by residues E80 and A81. E132 functions as the Proton donor/acceptor in the catalytic mechanism. Residues C166, N204, and T208 each contribute to the (3S)-3-hydroxy-3-methylglutaryl-CoA site. Catalysis depends on C166, which acts as the Acyl-thioester intermediate. K243 is subject to N6-acetyllysine. An N6-acetyllysine; alternate modification is found at K256. Residue K256 is modified to N6-succinyllysine; alternate. The (3S)-3-hydroxy-3-methylglutaryl-CoA site is built by S258 and H301. Residue H301 is the Proton donor/acceptor of the active site. K306 carries the N6-acetyllysine modification. A (3S)-3-hydroxy-3-methylglutaryl-CoA-binding site is contributed by K310. Position 310 is an N6-acetyllysine; alternate (K310). Position 310 is an N6-succinyllysine; alternate (K310). The residue at position 333 (K333) is an N6-succinyllysine. N6-acetyllysine; alternate occurs at positions 342, 350, 354, and 358. K342, K350, K354, and K358 each carry N6-succinyllysine; alternate. Residues N380 and S414 each coordinate (3S)-3-hydroxy-3-methylglutaryl-CoA. S433 carries the phosphoserine modification. The residue at position 437 (K437) is an N6-acetyllysine. S440 carries the post-translational modification Phosphoserine. An N6-acetyllysine; alternate modification is found at K447. At K447 the chain carries N6-succinyllysine; alternate. S456 carries the post-translational modification Phosphoserine. K473 carries the post-translational modification N6-acetyllysine; alternate. An N6-succinyllysine; alternate modification is found at K473. A Phosphoserine modification is found at S477.

Belongs to the thiolase-like superfamily. HMG-CoA synthase family. Homodimer. Succinylated. Desuccinylated by SIRT5. Succinylation, at least at Lys-310, inhibits the enzymatic activity.

The protein resides in the mitochondrion. It catalyses the reaction acetoacetyl-CoA + acetyl-CoA + H2O = (3S)-3-hydroxy-3-methylglutaryl-CoA + CoA + H(+). Its pathway is metabolic intermediate biosynthesis; (R)-mevalonate biosynthesis; (R)-mevalonate from acetyl-CoA: step 2/3. In terms of biological role, catalyzes the first irreversible step in ketogenesis, condensing acetyl-CoA to acetoacetyl-CoA to form HMG-CoA, which is converted by HMG-CoA reductase (HMGCR) into mevalonate. The sequence is that of Hydroxymethylglutaryl-CoA synthase, mitochondrial (HMGCS2) from Bos taurus (Bovine).